The primary structure comprises 198 residues: tRNA (cytidine(56)-2'-O)-methyltransferase (198 aa).

S-adenosyl-L-methionine contacts are provided by residues Leu-81, 110–114 (GAEKV), and 128–135 (IGNQPHSE). The segment at 178 to 198 (DAKQAEASGEGASRKNGQLPS) is disordered.

The protein belongs to the aTrm56 family. In terms of assembly, homodimer.

The protein localises to the cytoplasm. The catalysed reaction is cytidine(56) in tRNA + S-adenosyl-L-methionine = 2'-O-methylcytidine(56) in tRNA + S-adenosyl-L-homocysteine + H(+). Functionally, specifically catalyzes the AdoMet-dependent 2'-O-ribose methylation of cytidine at position 56 in tRNAs. The chain is tRNA (cytidine(56)-2'-O)-methyltransferase from Pyrococcus abyssi (strain GE5 / Orsay).